The following is a 605-amino-acid chain: DNA primase (605 aa).

Residues 38 to 62 (CPFHDEKTPSFTVSEDKQICHCFGC) form a CHC2-type zinc finger. The 82-residue stretch at 260–341 (DEIVLLEGFM…NVFVIQLPSG (82 aa)) folds into the Toprim domain. 3 residues coordinate Mg(2+): Glu266, Asp310, and Asp312.

It belongs to the DnaG primase family. As to quaternary structure, monomer. Interacts with DnaB. Zn(2+) is required as a cofactor. Mg(2+) serves as cofactor.

It carries out the reaction ssDNA + n NTP = ssDNA/pppN(pN)n-1 hybrid + (n-1) diphosphate.. In terms of biological role, RNA polymerase that catalyzes the synthesis of short RNA molecules used as primers for DNA polymerase during DNA replication. The sequence is that of DNA primase from Staphylococcus aureus.